The following is a 191-amino-acid chain: Probable ribosome biogenesis protein RLP24 (191 aa).

A Phosphoserine modification is found at Ser136.

This sequence belongs to the eukaryotic ribosomal protein eL24 family. Associated with nucleolar and cytoplasmic pre-60S particles. At the end of biogenesis it dissociates from cytoplasmic pre-60S particles and is likely to be exchanged for its ribosomal homologue, RPL24.

The protein resides in the nucleus. Its subcellular location is the nucleolus. Involved in the biogenesis of the 60S ribosomal subunit. Ensures the docking of NOG1 to pre-60S particles. The chain is Probable ribosome biogenesis protein RLP24 (RpL24-like) from Drosophila melanogaster (Fruit fly).